A 230-amino-acid chain; its full sequence is Lipoprotein-releasing system ATP-binding protein LolD (230 aa).

Positions 10-228 (LRAEHLSKVY…QLHMANGRLL (219 aa)) constitute an ABC transporter domain. 46–53 (GASGSGKS) provides a ligand contact to ATP.

Belongs to the ABC transporter superfamily. Lipoprotein translocase (TC 3.A.1.125) family. In terms of assembly, the complex is composed of two ATP-binding proteins (LolD) and two transmembrane proteins (LolC and LolE).

It is found in the cell inner membrane. In terms of biological role, part of the ABC transporter complex LolCDE involved in the translocation of mature outer membrane-directed lipoproteins, from the inner membrane to the periplasmic chaperone, LolA. Responsible for the formation of the LolA-lipoprotein complex in an ATP-dependent manner. This Bordetella avium (strain 197N) protein is Lipoprotein-releasing system ATP-binding protein LolD.